Consider the following 446-residue polypeptide: Phosphoglucosamine mutase (446 aa).

The active-site Phosphoserine intermediate is Ser-101. The Mg(2+) site is built by Ser-101, Asp-240, Asp-242, and Asp-244. Ser-101 carries the phosphoserine modification.

It belongs to the phosphohexose mutase family. Requires Mg(2+) as cofactor. In terms of processing, activated by phosphorylation.

The enzyme catalyses alpha-D-glucosamine 1-phosphate = D-glucosamine 6-phosphate. Its function is as follows. Catalyzes the conversion of glucosamine-6-phosphate to glucosamine-1-phosphate. This is Phosphoglucosamine mutase from Pseudomonas putida (strain W619).